We begin with the raw amino-acid sequence, 407 residues long: MTLWTARAAHRAWLDAEARRLVDFAAAADHPEHGFAWLDGSGAPLPEQGVHTWITCRVTHVAALAHLEGIPGASALADHGLRALAGPLRDPEHDGWFTALDSRGTVADSRKEAYQHAFVLLAAASATVAGRPGARELLDAAAAVIEQRFWEEETGRCRESWDAAWHADEPYRGANSNMHLVEAFLAAFDATGDRVWAERALRIAHFFVHEVAAPRDWRLPEHFTPDWQVVADYNTDDRAHPFRPYGVTVGHVLEWARLLVHVEAALPDPPSWLLADAEAMFAAAVARGWSVDGTEGFVYTLDYDDTPVVRSRMHWVVAEAISAAAVLGQRTGDERYEHWYRTWWDHAATYFVDTVQGSWHHELDPTLAPPPGGTWSGKPDVYHAYQATRLPLLPLAPSLAGALATVG.

Residues His-251 and His-383 each act as proton donor/acceptor in the active site.

The protein belongs to the N-acylglucosamine 2-epimerase family. Homodimer.

It carries out the reaction D-mannose = D-fructose. It catalyses the reaction D-lyxose = D-xylulose. Its activity is regulated as follows. Significantly inhibited by divalent metal ions such as Cu(2+), Cd(2+) or Ca(2+). Functionally, catalyzes the reversible isomerization of D-mannose to D-fructose. Shows weaker activity on D-lyxose, but cannot use N-acetyl D-glucosamine. The chain is D-mannose isomerase from Thermobifida fusca (Thermomonospora fusca).